The sequence spans 136 residues: NADPH-dependent 7-cyano-7-deazaguanine reductase (136 aa).

The active-site Thioimide intermediate is the Cys-50. Asp-57 (proton donor) is an active-site residue. Residues 72 to 74 and 91 to 92 each bind substrate; these read YEL and HE.

The protein belongs to the GTP cyclohydrolase I family. QueF type 1 subfamily.

It is found in the cytoplasm. It catalyses the reaction 7-aminomethyl-7-carbaguanine + 2 NADP(+) = 7-cyano-7-deazaguanine + 2 NADPH + 3 H(+). It participates in tRNA modification; tRNA-queuosine biosynthesis. Its function is as follows. Catalyzes the NADPH-dependent reduction of 7-cyano-7-deazaguanine (preQ0) to 7-aminomethyl-7-deazaguanine (preQ1). The chain is NADPH-dependent 7-cyano-7-deazaguanine reductase from Prochlorococcus marinus (strain MIT 9515).